Reading from the N-terminus, the 406-residue chain is Kelch domain-containing protein 2 (406 aa).

Kelch repeat units follow at residues 31 to 85 (ERSG…NTEG), 92 to 136 (SGSC…ERID), 148 to 207 (LGVW…AWSQ), 221 to 259 (HACA…NELI), 271 to 311 (HSLT…IQFN), and 322 to 359 (HTAC…IFSV).

As to quaternary structure, component of a CRL2(KLHDC2) E3 ubiquitin-protein ligase complex, also named ECS(KLHDC2) complex, composed of CUL2, Elongin BC (ELOB and ELOC), RBX1 and substrate-specific adapter KLHDC2. May form oligomers as a KLHDC2-ELOB-ELOC complex; this interaction is autoinhibitory for the E3 ligase complex as the substrate-binding site of KLHDC2 is blocked in the oligomer. Interacts with CREB3; interaction is direct and specific as it does not interact with CREB1, ATF4, ATF6, JUN, FOS, CEBPA or herpes simplex virus transactivator VP16. In terms of processing, autoubiquitinated by the CRL2(KLHDC2) E3 ligase complex.

The protein resides in the nucleus. The protein operates within protein modification; protein ubiquitination. In terms of biological role, substrate-recognition component of a Cul2-RING (CRL2) E3 ubiquitin-protein ligase complex of the DesCEND (destruction via C-end degrons) pathway, which recognizes a C-degron located at the extreme C terminus of target proteins, leading to their ubiquitination and degradation. The C-degron recognized by the DesCEND pathway is usually a motif of less than ten residues and can be present in full-length proteins, truncated proteins or proteolytically cleaved forms. The CRL2(KLHDC2) complex specifically recognizes proteins with a diglycine (Gly-Gly) at the C-terminus, leading to their ubiquitination and degradation. The CRL2(KLHDC2) complex mediates ubiquitination and degradation of truncated SELENOK and SELENOS selenoproteins produced by failed UGA/Sec decoding, which end with a diglycine. The CRL2(KLHDC2) complex also recognizes proteolytically cleaved proteins ending with Gly-Gly, such as the N-terminal fragment of USP1, leading to their degradation. May also act as an indirect repressor of CREB3-mediated transcription by interfering with CREB3-DNA-binding. The polypeptide is Kelch domain-containing protein 2 (Mus musculus (Mouse)).